Consider the following 255-residue polypeptide: Menaquinol:cytochrome c reductase cytochrome c subunit (255 aa).

3 helical membrane-spanning segments follow: residues 46–62 (WMVG…LTIV), 104–124 (VVGA…APFL), and 137–157 (VAVG…WQSV). Residues 178-253 (DTNAEGYKVF…ELAKFISETT (76 aa)) form the Cytochrome c domain. Positions 192, 195, and 196 each coordinate heme c.

This sequence belongs to the cytochrome b family. As to quaternary structure, the main subunits of the menaquinol:cytochrome c complex are a Rieske-type iron-sulfur protein (QcrA), a cytochrome b (QcrB) and a cytochrome c (QcrC). The cofactor is heme c.

It is found in the cell membrane. Its function is as follows. Component of the menaquinol:cytochrome c reductase complex. The polypeptide is Menaquinol:cytochrome c reductase cytochrome c subunit (qcrC) (Bacillus subtilis (strain 168)).